The sequence spans 261 residues: Probable membrane transporter protein XF_0764 (261 aa).

Transmembrane regions (helical) follow at residues 6–26 (LIVTIGSGGLVGFALGLLGGG), 29–49 (ILATPLLLYVVGVTNPHIAIG), 78–98 (VIFALVGTLGAFLGSSIGMLI), 99–119 (DGQRLLLLFGLLMAMVGLLML), 150–170 (AASGFFGIGGGFLIVPALIFA), 175–195 (TINAIGSSLLAVGTFGLITTL), 205–225 (WTIAMEFIVGGITGGGLGTLL), and 239–259 (VFGLIVIAVAIYVIWRSWASL).

This sequence belongs to the 4-toluene sulfonate uptake permease (TSUP) (TC 2.A.102) family.

The protein resides in the cell membrane. The sequence is that of Probable membrane transporter protein XF_0764 from Xylella fastidiosa (strain 9a5c).